A 158-amino-acid polypeptide reads, in one-letter code: Trafficking protein particle complex subunit 6B (158 aa).

The protein belongs to the TRAPP small subunits family. BET3 subfamily. As to quaternary structure, homodimer. Part of a TRAPP complex. Heterodimer with TRAPPC3. The heterodimer TRAPPC6B-TRAPPC3 interacts with TRAPPC1 likely providing a core for TRAPP complex formation. In terms of tissue distribution, widely expressed. Expressed in lung, heart, liver, spleen, brain and kidney.

The protein localises to the golgi apparatus. It is found in the cis-Golgi network. The protein resides in the endoplasmic reticulum. Component of a transport protein particle (TRAPP) complex that may function in specific stages of inter-organelle traffic. Specifically involved in the early development of neural circuitry, likely by controlling the frequency and amplitude of intracellular calcium transients implicated in the regulation of neuron differentiation and survival. The sequence is that of Trafficking protein particle complex subunit 6B from Mus musculus (Mouse).